Reading from the N-terminus, the 87-residue chain is Small ribosomal subunit protein bS16 (87 aa).

This sequence belongs to the bacterial ribosomal protein bS16 family.

The sequence is that of Small ribosomal subunit protein bS16 from Desulfatibacillum aliphaticivorans.